The primary structure comprises 119 residues: Fluoride-specific ion channel FluC (119 aa).

A run of 4 helical transmembrane segments spans residues 5-25 (IIPLSIGAALGATARWLLNLA), 30-50 (IPPATGNLFANWIGAFLIGIF), 59-79 (WKLLLITGFLGSLTTLSGFSL), and 97-117 (IFLHTAGSLLLTWLGLKIGAA). Residues Gly69 and Thr72 each coordinate Na(+).

This sequence belongs to the fluoride channel Fluc/FEX (TC 1.A.43) family.

The protein localises to the cell inner membrane. The catalysed reaction is fluoride(in) = fluoride(out). Its activity is regulated as follows. Na(+) is not transported, but it plays an essential structural role and its presence is essential for fluoride channel function. Its function is as follows. Fluoride-specific ion channel. Important for reducing fluoride concentration in the cell, thus reducing its toxicity. The polypeptide is Fluoride-specific ion channel FluC (Neisseria meningitidis serogroup B (strain ATCC BAA-335 / MC58)).